A 397-amino-acid chain; its full sequence is Tryptophan synthase beta chain (397 aa).

K87 carries the post-translational modification N6-(pyridoxal phosphate)lysine.

Belongs to the TrpB family. Tetramer of two alpha and two beta chains. Pyridoxal 5'-phosphate is required as a cofactor.

The enzyme catalyses (1S,2R)-1-C-(indol-3-yl)glycerol 3-phosphate + L-serine = D-glyceraldehyde 3-phosphate + L-tryptophan + H2O. The protein operates within amino-acid biosynthesis; L-tryptophan biosynthesis; L-tryptophan from chorismate: step 5/5. The beta subunit is responsible for the synthesis of L-tryptophan from indole and L-serine. This is Tryptophan synthase beta chain from Enterobacter sp. (strain 638).